Here is a 681-residue protein sequence, read N- to C-terminus: DNA ligase (681 aa).

NAD(+) contacts are provided by residues 45–49, 94–95, and E120; these read DFDFD and SL. The active-site N6-AMP-lysine intermediate is K122. Residues R143, E177, K289, and K313 each coordinate NAD(+). Zn(2+) contacts are provided by C403, C406, C421, and C426. One can recognise a BRCT domain in the interval 593–681; that stretch reads ADQQPFAGQS…SLKIDFKNLI (89 aa).

It belongs to the NAD-dependent DNA ligase family. LigA subfamily. It depends on Mg(2+) as a cofactor. Mn(2+) serves as cofactor.

It carries out the reaction NAD(+) + (deoxyribonucleotide)n-3'-hydroxyl + 5'-phospho-(deoxyribonucleotide)m = (deoxyribonucleotide)n+m + AMP + beta-nicotinamide D-nucleotide.. Its function is as follows. DNA ligase that catalyzes the formation of phosphodiester linkages between 5'-phosphoryl and 3'-hydroxyl groups in double-stranded DNA using NAD as a coenzyme and as the energy source for the reaction. It is essential for DNA replication and repair of damaged DNA. The chain is DNA ligase from Leptospira interrogans serogroup Icterohaemorrhagiae serovar Lai (strain 56601).